The primary structure comprises 551 residues: Membrane protein insertase YidC (551 aa).

A helical transmembrane segment spans residues 3–23 (ANHIRILLLVTIAIMFISLMG). The segment covering 33 to 47 (NTKQQTSATQNNSHY) has biased composition (polar residues). A disordered region spans residues 33–59 (NTKQQTSATQNNSHYDNADSSTNTDVT). The span at 50-59 (ADSSTNTDVT) shows a compositional bias: low complexity. The next 3 helical transmembrane spans lie at 361–381 (LVGN…LIFY), 431–451 (LSGC…YWVL), and 504–524 (VMMF…SGLV).

It belongs to the OXA1/ALB3/YidC family. Type 1 subfamily. In terms of assembly, interacts with the Sec translocase complex via SecD. Specifically interacts with transmembrane segments of nascent integral membrane proteins during membrane integration.

It is found in the cell inner membrane. Its function is as follows. Required for the insertion and/or proper folding and/or complex formation of integral membrane proteins into the membrane. Involved in integration of membrane proteins that insert both dependently and independently of the Sec translocase complex, as well as at least some lipoproteins. Aids folding of multispanning membrane proteins. The protein is Membrane protein insertase YidC of Francisella tularensis subsp. tularensis (strain SCHU S4 / Schu 4).